The following is a 171-amino-acid chain: Methylated-DNA--protein-cysteine methyltransferase (171 aa).

The Nucleophile; methyl group acceptor role is filled by cysteine 139.

The protein belongs to the MGMT family.

It localises to the cytoplasm. The enzyme catalyses a 6-O-methyl-2'-deoxyguanosine in DNA + L-cysteinyl-[protein] = S-methyl-L-cysteinyl-[protein] + a 2'-deoxyguanosine in DNA. It carries out the reaction a 4-O-methyl-thymidine in DNA + L-cysteinyl-[protein] = a thymidine in DNA + S-methyl-L-cysteinyl-[protein]. Functionally, involved in the cellular defense against the biological effects of O6-methylguanine (O6-MeG) and O4-methylthymine (O4-MeT) in DNA. Repairs the methylated nucleobase in DNA by stoichiometrically transferring the methyl group to a cysteine residue in the enzyme. This is a suicide reaction: the enzyme is irreversibly inactivated. The polypeptide is Methylated-DNA--protein-cysteine methyltransferase (Shigella flexneri).